Here is a 495-residue protein sequence, read N- to C-terminus: Bile acid-sensitive ion channel (495 aa).

Residues 1–30 form a binds the plasma membrane and stabilizes the channel in the closed state region; the sequence is MEHTEKSQVHAEKGLLGKIKRYLSKRPLPS. The Cytoplasmic portion of the chain corresponds to 1–61; sequence MEHTEKSQVH…NIAQNQNKVR (61 aa). A helical transmembrane segment spans residues 62–82; the sequence is KVIWLAVVLGSVSLLVWQIYS. Topologically, residues 83–459 are extracellular; it reads RLVNYFTWPT…GLFCGASLIT (377 aa). Cystine bridges form between Cys112/Cys207, Cys185/Cys192, Cys298/Cys377, Cys315/Cys373, Cys328/Cys350, and Cys330/Cys342. Residues Asn147, Asn163, and Asn179 are each glycosylated (N-linked (GlcNAc...) asparagine). N-linked (GlcNAc...) asparagine glycans are attached at residues Asn370, Asn405, and Asn421. The GAS motif; ion selectivity filter signature appears at 454–456; sequence GAS. A helical transmembrane segment spans residues 460–480; that stretch reads IIEIIEYFFTNFYWVLIFFLL. Residues 481-495 are Cytoplasmic-facing; it reads KILETIQRTSPPQAV.

Belongs to the amiloride-sensitive sodium channel (TC 1.A.6) family. ASIC5 subfamily. As to quaternary structure, forms homotrimeric channels. As to expression, expressed by cholangiocytes (at protein level). Detected in cerebellum, brainstem, kidney, liver, hepatocytes, lung, intestine and embryo. In the cerebellum, restricted to interneurons in the granular layer, specifically in GRM1-expressing unipolar brush cells of the vestibulocerebellum.

It localises to the apical cell membrane. The protein resides in the cell membrane. It catalyses the reaction Na(+)(in) = Na(+)(out). It carries out the reaction Li(+)(in) = Li(+)(out). The catalysed reaction is K(+)(in) = K(+)(out). The enzyme catalyses H(+)(in) = H(+)(out). Its activity is regulated as follows. Inhibited by the diuretic drug amiloride. Contrary to its rat ortholog it is not inhibited by Ca(2+). Forms bile acid-gated sodium channels and may play a role in bile acid-dependent absorption and secretion by epithelial cells of the bile ducts. Displays high selectivity for sodium ions but can also permit the permeation of other cations. The gating could be indirect and the consequence of alterations of the membrane environment of the channel by bile acids. As a sodium channel of type II unipolar brush cells of the vestibulocerebellum, controlling the electrical activity of these cells, could play a role in motor coordination and balance. The polypeptide is Bile acid-sensitive ion channel (Mus musculus (Mouse)).